Here is a 1451-residue protein sequence, read N- to C-terminus: Murinoglobulin-2 (1451 aa).

Residues 1 to 27 form the signal peptide; the sequence is MWKSRRAQLCLFSVLLAFLPSASSLNG. 3 disulfides stabilise this stretch: cysteine 48-cysteine 86, cysteine 251-cysteine 276, and cysteine 269-cysteine 288. Asparagine 55 carries N-linked (GlcNAc...) asparagine glycosylation. N-linked (GlcNAc...) asparagine glycans are attached at residues asparagine 294, asparagine 313, and asparagine 500. Disulfide bonds link cysteine 461/cysteine 555, cysteine 587/cysteine 773, and cysteine 634/cysteine 680. Positions 677 to 734 are bait region; it reads PKICFDSAPMSGPRGKFDLAFSSEVSGTLQKGSSKRPQPEEPPREDPPPKDPLAETIR. Positions 703-728 are disordered; the sequence is GTLQKGSSKRPQPEEPPREDPPPKDP. Residues 713–728 are compositionally biased toward basic and acidic residues; sequence PQPEEPPREDPPPKDP. Residues asparagine 749, asparagine 776, and asparagine 871 are each glycosylated (N-linked (GlcNAc...) asparagine). Disulfide bonds link cysteine 849–cysteine 885, cysteine 923–cysteine 1274, cysteine 1081–cysteine 1104, and cysteine 1298–cysteine 1444. Positions 974 to 977 form a cross-link, isoglutamyl cysteine thioester (Cys-Gln); that stretch reads CGEQ. N-linked (GlcNAc...) asparagine glycosylation occurs at asparagine 1401.

The protein belongs to the protease inhibitor I39 (alpha-2-macroglobulin) family. In terms of assembly, monomer. Plasma.

The protein resides in the secreted. In terms of biological role, a proteinase activates the inhibitor by specific proteolysis in the bait region, which, by an unknown mechanism leads to reaction at the cysteinyl-glutamyl internal thiol ester site and to a conformational change, whereby the proteinase is trapped and/or covalently bound to the inhibitor. While in the tetrameric proteinase inhibitors steric inhibition is sufficiently strong, monomeric forms need a covalent linkage between the activated glutamyl residue of the original thiol ester and a terminal amino group of a lysine or another nucleophilic group on the proteinase, for inhibition to be effective. This is Murinoglobulin-2 (Mug2) from Mus musculus (Mouse).